Here is a 506-residue protein sequence, read N- to C-terminus: Galactose/methyl galactoside import ATP-binding protein MglA (506 aa).

ABC transporter domains follow at residues 14-249 (LEMK…VGRS) and 264-506 (VMLE…SLYL). 46-53 (GENGAGKS) contributes to the ATP binding site.

This sequence belongs to the ABC transporter superfamily. Galactose/methyl galactoside importer (TC 3.A.1.2.3) family. In terms of assembly, the complex is composed of one ATP-binding protein (MglA), two transmembrane proteins (MglC) and a solute-binding protein (MglB).

Its subcellular location is the cell inner membrane. The enzyme catalyses D-galactose(out) + ATP + H2O = D-galactose(in) + ADP + phosphate + H(+). The catalysed reaction is methyl beta-D-galactoside(out) + ATP + H2O = methyl beta-D-galactoside(in) + ADP + phosphate + H(+). In terms of biological role, part of the ABC transporter complex MglABC involved in galactose/methyl galactoside import. Responsible for energy coupling to the transport system. This is Galactose/methyl galactoside import ATP-binding protein MglA from Sodalis glossinidius (strain morsitans).